A 359-amino-acid chain; its full sequence is Protein disulfide-isomerase C17H9.14c (359 aa).

Positions 1-19 (MRLPLLSFVIFALFALVFA) are cleaved as a signal peptide. Thioredoxin domains follow at residues 20–130 (SGVV…EKTG) and 134–250 (RKIV…KKSG). Residues C51 and C54 each act as nucleophile in the active site. 2 disulfides stabilise this stretch: C51/C54 and C170/C173.

The protein belongs to the protein disulfide isomerase family.

It catalyses the reaction Catalyzes the rearrangement of -S-S- bonds in proteins.. Participates in the folding of proteins containing disulfide bonds, may be involved in glycosylation, prolyl hydroxylation and triglyceride transfer. This Schizosaccharomyces pombe (strain 972 / ATCC 24843) (Fission yeast) protein is Protein disulfide-isomerase C17H9.14c.